Reading from the N-terminus, the 103-residue chain is Co-chaperonin GroES (103 aa).

The protein belongs to the GroES chaperonin family. Heptamer of 7 subunits arranged in a ring. Interacts with the chaperonin GroEL.

The protein localises to the cytoplasm. Functionally, together with the chaperonin GroEL, plays an essential role in assisting protein folding. The GroEL-GroES system forms a nano-cage that allows encapsulation of the non-native substrate proteins and provides a physical environment optimized to promote and accelerate protein folding. GroES binds to the apical surface of the GroEL ring, thereby capping the opening of the GroEL channel. This chain is Co-chaperonin GroES, found in Synechococcus sp. (strain JA-3-3Ab) (Cyanobacteria bacterium Yellowstone A-Prime).